Consider the following 568-residue polypeptide: MTHSVEDIKSTSRRLRGSLEQSLADPVTGALREDDQTLIKYHGSYQQDDRDIRDERRRQKLEPAYQFMIRTRTPGGVISPSQWLALDGIATRYANHSLRITTRQAFQFHGVIKRELKATMQAINATLIDTLAACGDVNRNVQVAANPLLSQAHATLYADAARVSEHLLPNTRAYYEIWLDEERVSGSGAEDEPIYGDRYLPRKFKIGFAAPPHNDVDVFANDLGFIAILREGQLLGYNVSIGGGMGASHGDAETWPRVANVIGFVTGDQLLDIATAVVTTQRDLGNRAVRKRARFKYTIDDHGLDTIVAEIERRAGFSLQPAQPFAFAHNGDRYGWVEGEQGDWHLTLSLPAGRIADTDTAAHLSGLRAIAQLQMGEFRMTPNQNLVIAGVPAEQRAQIDQLVAQYGLDAGNLAPTALARGAMACVALPTCGLAMAEAERYLPDFSAALQPLLERHGLAQTPIVLRLSGCPNGCSRPYLAEIALVGKAPGRYNLMLGGDRRGQRLNTLYRENINEADILAALEPLLARYAAERDRHTDEGFGDFLHRSGLIALPPYPTHRHLDLELLA.

Cysteine 425, cysteine 431, cysteine 470, and cysteine 474 together coordinate [4Fe-4S] cluster. Residue cysteine 474 participates in siroheme binding.

This sequence belongs to the nitrite and sulfite reductase 4Fe-4S domain family. Alpha(8)-beta(8). The alpha component is a flavoprotein, the beta component is a hemoprotein. Siroheme is required as a cofactor. Requires [4Fe-4S] cluster as cofactor.

It carries out the reaction hydrogen sulfide + 3 NADP(+) + 3 H2O = sulfite + 3 NADPH + 4 H(+). The protein operates within sulfur metabolism; hydrogen sulfide biosynthesis; hydrogen sulfide from sulfite (NADPH route): step 1/1. Functionally, component of the sulfite reductase complex that catalyzes the 6-electron reduction of sulfite to sulfide. This is one of several activities required for the biosynthesis of L-cysteine from sulfate. This chain is Sulfite reductase [NADPH] hemoprotein beta-component, found in Xanthomonas campestris pv. campestris (strain B100).